A 475-amino-acid polypeptide reads, in one-letter code: Aspartyl/glutamyl-tRNA(Asn/Gln) amidotransferase subunit B (475 aa).

This sequence belongs to the GatB/GatE family. GatB subfamily. In terms of assembly, heterotrimer of A, B and C subunits.

The catalysed reaction is L-glutamyl-tRNA(Gln) + L-glutamine + ATP + H2O = L-glutaminyl-tRNA(Gln) + L-glutamate + ADP + phosphate + H(+). It catalyses the reaction L-aspartyl-tRNA(Asn) + L-glutamine + ATP + H2O = L-asparaginyl-tRNA(Asn) + L-glutamate + ADP + phosphate + 2 H(+). In terms of biological role, allows the formation of correctly charged Asn-tRNA(Asn) or Gln-tRNA(Gln) through the transamidation of misacylated Asp-tRNA(Asn) or Glu-tRNA(Gln) in organisms which lack either or both of asparaginyl-tRNA or glutaminyl-tRNA synthetases. The reaction takes place in the presence of glutamine and ATP through an activated phospho-Asp-tRNA(Asn) or phospho-Glu-tRNA(Gln). This Staphylococcus carnosus (strain TM300) protein is Aspartyl/glutamyl-tRNA(Asn/Gln) amidotransferase subunit B.